The following is a 450-amino-acid chain: Homogentisate 1,2-dioxygenase (450 aa).

His304 (proton acceptor) is an active-site residue. Residues His347 and Glu353 each contribute to the Fe cation site. Tyr362 and His383 together coordinate homogentisate. Residue His383 coordinates Fe cation.

This sequence belongs to the homogentisate dioxygenase family. Hexamer; dimer of trimers. It depends on Fe cation as a cofactor.

The catalysed reaction is homogentisate + O2 = 4-maleylacetoacetate + H(+). Its pathway is amino-acid degradation; L-phenylalanine degradation; acetoacetate and fumarate from L-phenylalanine: step 4/6. Functionally, involved in the catabolism of homogentisate (2,5-dihydroxyphenylacetate or 2,5-OH-PhAc), a central intermediate in the degradation of phenylalanine and tyrosine. Catalyzes the oxidative ring cleavage of the aromatic ring of homogentisate to yield maleylacetoacetate. This is Homogentisate 1,2-dioxygenase from Burkholderia mallei (strain NCTC 10229).